Consider the following 194-residue polypeptide: 7-methyl-GTP pyrophosphatase (194 aa).

D69 serves as the catalytic Proton acceptor.

This sequence belongs to the Maf family. YceF subfamily. A divalent metal cation is required as a cofactor.

The protein resides in the cytoplasm. It carries out the reaction N(7)-methyl-GTP + H2O = N(7)-methyl-GMP + diphosphate + H(+). Its function is as follows. Nucleoside triphosphate pyrophosphatase that hydrolyzes 7-methyl-GTP (m(7)GTP). May have a dual role in cell division arrest and in preventing the incorporation of modified nucleotides into cellular nucleic acids. This is 7-methyl-GTP pyrophosphatase (yceF1) from Salmonella paratyphi A (strain ATCC 9150 / SARB42).